Consider the following 23-residue polypeptide: Gastrin-releasing peptide (23 aa).

Met-23 is modified (methionine amide).

This sequence belongs to the bombesin/neuromedin-B/ranatensin family.

The protein localises to the secreted. The protein resides in the cytoplasmic vesicle. It is found in the secretory vesicle lumen. In terms of biological role, stimulates the release of gastrin and other gastrointestinal hormones. The chain is Gastrin-releasing peptide (grp) from Oncorhynchus mykiss (Rainbow trout).